A 446-amino-acid polypeptide reads, in one-letter code: N-succinylarginine dihydrolase (446 aa).

Substrate is bound by residues 19–28 (AGLSFGNVAS), Asn-110, and 137–138 (HR). Glu-174 is an active-site residue. Arg-213 serves as a coordination point for substrate. The active site involves His-249. Substrate contacts are provided by Asp-251 and Asn-364. Residue Cys-370 is the Nucleophile of the active site.

Belongs to the succinylarginine dihydrolase family. In terms of assembly, homodimer.

It carries out the reaction N(2)-succinyl-L-arginine + 2 H2O + 2 H(+) = N(2)-succinyl-L-ornithine + 2 NH4(+) + CO2. The protein operates within amino-acid degradation; L-arginine degradation via AST pathway; L-glutamate and succinate from L-arginine: step 2/5. In terms of biological role, catalyzes the hydrolysis of N(2)-succinylarginine into N(2)-succinylornithine, ammonia and CO(2). The polypeptide is N-succinylarginine dihydrolase (Burkholderia mallei (strain NCTC 10247)).